The primary structure comprises 558 residues: NAD(P)H-quinone oxidoreductase chain 4 (558 aa).

The next 15 helical transmembrane spans lie at 25–45 (FPWL…VPFV), 56–76 (WFAL…YLTG), 90–110 (VSWL…LSMP), 111–131 (LILL…PVTF), 133–153 (PKLF…VFAV), 157–177 (LLFF…LAIW), 189–209 (FILY…AMGF), 230–250 (GFEL…LPIV), 264–284 (TAPV…YALM), 298–318 (FAPL…LTSF), 327–347 (IAYS…SFSE), 353–373 (AMLQ…LVGA), 397–417 (FALW…SGFV), 438–458 (IVID…LLSM), and 485–505 (VYII…PKLM).

Belongs to the complex I subunit 4 family.

It is found in the cellular thylakoid membrane. The catalysed reaction is a plastoquinone + NADH + (n+1) H(+)(in) = a plastoquinol + NAD(+) + n H(+)(out). It catalyses the reaction a plastoquinone + NADPH + (n+1) H(+)(in) = a plastoquinol + NADP(+) + n H(+)(out). Functionally, NDH-1 shuttles electrons from NAD(P)H, via FMN and iron-sulfur (Fe-S) centers, to quinones in the respiratory chain. The immediate electron acceptor for the enzyme in this species is believed to be plastoquinone. Couples the redox reaction to proton translocation (for every two electrons transferred, four hydrogen ions are translocated across the cytoplasmic membrane), and thus conserves the redox energy in a proton gradient. This is NAD(P)H-quinone oxidoreductase chain 4 from Synechococcus sp. (strain CC9311).